The sequence spans 693 residues: Elongation factor G (693 aa).

Residues 8–282 form the tr-type G domain; the sequence is EKTRNIGIMA…AVVDYLPSPL (275 aa). Residues 17-24, 81-85, and 135-138 contribute to the GTP site; these read AHVDAGKT, DTPGH, and NKMD.

Belongs to the TRAFAC class translation factor GTPase superfamily. Classic translation factor GTPase family. EF-G/EF-2 subfamily.

Its subcellular location is the cytoplasm. Functionally, catalyzes the GTP-dependent ribosomal translocation step during translation elongation. During this step, the ribosome changes from the pre-translocational (PRE) to the post-translocational (POST) state as the newly formed A-site-bound peptidyl-tRNA and P-site-bound deacylated tRNA move to the P and E sites, respectively. Catalyzes the coordinated movement of the two tRNA molecules, the mRNA and conformational changes in the ribosome. This chain is Elongation factor G, found in Streptococcus mutans serotype c (strain ATCC 700610 / UA159).